The primary structure comprises 318 residues: ADP-ribosyl cyclase/cyclic ADP-ribose hydrolase 2 (318 aa).

The first 32 residues, 1–32 (MAAQGCAASRLLQLLLQLLLLLLLLAAGGARA), serve as a signal peptide directing secretion. Cystine bridges form between cysteine 51–cysteine 67, cysteine 83–cysteine 163, and cysteine 144–cysteine 157. N-linked (GlcNAc...) asparagine glycans are attached at residues asparagine 66 and asparagine 95. Tryptophan 109 lines the NAD(+) pocket. Tryptophan 109 contributes to the nicotinamide binding site. Asparagine 148 is a glycosylation site (N-linked (GlcNAc...) asparagine). Residue tryptophan 172 participates in NAD(+) binding. Asparagine 192 carries N-linked (GlcNAc...) asparagine glycosylation. An NAD(+)-binding site is contributed by glutamate 210. Intrachain disulfides connect cysteine 238–cysteine 259 and cysteine 271–cysteine 280. A lipid anchor (GPI-anchor amidated alanine) is attached at alanine 293. A propeptide spans 294 to 318 (PSLYTEQRAGLIIPLFLVLASRTQL) (removed in mature form).

It belongs to the ADP-ribosyl cyclase family. In terms of assembly, homodimer. Expressed in various tissues including placenta, lung, liver and kidney.

It is found in the cell membrane. The catalysed reaction is NAD(+) + H2O = ADP-D-ribose + nicotinamide + H(+). The enzyme catalyses NAD(+) = cyclic ADP-beta-D-ribose + nicotinamide + H(+). It carries out the reaction cyclic ADP-beta-D-ribose + H2O = ADP-D-ribose. Its activity is regulated as follows. ADP-ribosyl cyclase and cADPR hydrolase activities are both activated by Zn(2+) or Mn(2+), and inhibited by Cu(2+), while Mg(2+) and Ca(2+) do not have any significant influence. Functionally, catalyzes both the synthesis of cyclic ADP-beta-D-ribose (cADPR) from NAD(+), and its hydrolysis to ADP-D-ribose (ADPR). Cyclic ADPR is known to serve as an endogenous second messenger that elicits calcium release from intracellular stores, and thus regulates the mobilization of intracellular calcium. May be involved in pre-B-cell growth. The sequence is that of ADP-ribosyl cyclase/cyclic ADP-ribose hydrolase 2 (BST1) from Homo sapiens (Human).